Reading from the N-terminus, the 492-residue chain is Malonyl-CoA decarboxylase, mitochondrial (492 aa).

The N-terminal 38 residues, 1-38 (MRGLGPSLRARRLLPLRYPPRPPGPRGPRLCSGLTASA), are a transit peptide targeting the mitochondrion. The interval 39–189 (MDELLRRAVP…VLKSMLSEWF (151 aa)) is alpha-helical domain. Residue Lys58 is modified to N6-acetyllysine. The residue at position 167 (Lys167) is an N6-acetyllysine; alternate. Lys167 is modified (N6-succinyllysine; alternate). The interval 190–492 (SSGFLNLERV…VAQFQSNSKL (303 aa)) is catalytic domain. Lys210 bears the N6-acetyllysine mark. At Lys221 the chain carries N6-succinyllysine. 298-304 (QGVELGT) contacts malonyl-CoA. Residue Lys316 is modified to N6-acetyllysine. Malonyl-CoA is bound at residue Ser328. The active-site Proton acceptor is Ser328. N6-acetyllysine; alternate is present on Lys385. N6-succinyllysine; alternate is present on Lys385. The residue at position 388 (Lys388) is an N6-acetyllysine. His422 contributes to the malonyl-CoA binding site. The active-site Proton donor is His422. N6-acetyllysine is present on residues Lys441 and Lys471. Positions 490–492 (SKL) match the Microbody targeting signal motif.

In terms of assembly, homotetramer. Dimer of dimers. The two subunits within a dimer display conformational differences suggesting that at any given moment, only one of the two subunits is competent for malonyl-CoA binding and catalytic activity. Under oxidizing conditions, can form disulfide-linked homotetramers (in vitro). Associates with the peroxisomal targeting signal receptor PEX5. In terms of processing, acetylation at Lys-471 activates malonyl-CoA decarboxylase activity. Deacetylation at Lys-471 by SIRT4 represses activity, leading to promote lipogenesis. Interchain disulfide bonds may form in peroxisomes (Potential). Interchain disulfide bonds are not expected to form in the reducing environment of the cytoplasm and mitochondria. As to expression, expressed in liver, heart, skeletal muscles and adipose tissues (at protein level). Ubiquitous. Strongly expressed in liver, kidney, heart, skeletal muscle and adipose tissues. Weakly expressed in brain.

The protein resides in the cytoplasm. Its subcellular location is the mitochondrion matrix. The protein localises to the peroxisome. It is found in the peroxisome matrix. It catalyses the reaction malonyl-CoA + H(+) = acetyl-CoA + CO2. It participates in metabolic intermediate biosynthesis; acetyl-CoA biosynthesis; acetyl-CoA from malonyl-CoA: step 1/1. Its activity is regulated as follows. Malonyl-CoA decarboxylase activity does not require any cofactors or divalent metal ions. In terms of biological role, catalyzes the conversion of malonyl-CoA to acetyl-CoA. In the fatty acid biosynthesis MCD selectively removes malonyl-CoA and thus assures that methyl-malonyl-CoA is the only chain elongating substrate for fatty acid synthase and that fatty acids with multiple methyl side chains are produced. In peroxisomes it may be involved in degrading intraperoxisomal malonyl-CoA, which is generated by the peroxisomal beta-oxidation of odd chain-length dicarboxylic fatty acids. Plays a role in the metabolic balance between glucose and lipid oxidation in muscle independent of alterations in insulin signaling. May play a role in controlling the extent of ischemic injury by promoting glucose oxidation. This chain is Malonyl-CoA decarboxylase, mitochondrial, found in Rattus norvegicus (Rat).